The following is an 85-amino-acid chain: Cytochrome b (85 aa).

The next 3 helical transmembrane spans lie at 1–8 (LTGLFLAM), 32–53 (WLIR…YLHI), and 68–85 (WNVG…AFVG). Heme b is bound by residues His-38 and His-52.

It belongs to the cytochrome b family. In terms of assembly, the cytochrome bc1 complex contains 3 respiratory subunits (MT-CYB, CYC1 and UQCRFS1), 2 core proteins (UQCRC1 and UQCRC2) and probably 6 low-molecular weight proteins. Heme b is required as a cofactor.

Its subcellular location is the mitochondrion inner membrane. Its function is as follows. Component of the ubiquinol-cytochrome c reductase complex (complex III or cytochrome b-c1 complex) that is part of the mitochondrial respiratory chain. The b-c1 complex mediates electron transfer from ubiquinol to cytochrome c. Contributes to the generation of a proton gradient across the mitochondrial membrane that is then used for ATP synthesis. This is Cytochrome b (mt-cyb) from Pomoxis nigromaculatus (Black crappie).